We begin with the raw amino-acid sequence, 396 residues long: Elongation factor Tu (396 aa).

A tr-type G domain is found at Lys10–Val205. The interval Gly19–Thr26 is G1. Gly19 to Thr26 lines the GTP pocket. Thr26 provides a ligand contact to Mg(2+). The segment at Gly62–Asn66 is G2. A G3 region spans residues Asp83–Gly86. Residues Asp83–His87 and Asn138–Asp141 contribute to the GTP site. The G4 stretch occupies residues Asn138–Asp141. The G5 stretch occupies residues Ser175–Leu177.

The protein belongs to the TRAFAC class translation factor GTPase superfamily. Classic translation factor GTPase family. EF-Tu/EF-1A subfamily. As to quaternary structure, monomer.

Its subcellular location is the cytoplasm. It carries out the reaction GTP + H2O = GDP + phosphate + H(+). Its function is as follows. GTP hydrolase that promotes the GTP-dependent binding of aminoacyl-tRNA to the A-site of ribosomes during protein biosynthesis. This chain is Elongation factor Tu, found in Corynebacterium kroppenstedtii (strain DSM 44385 / JCM 11950 / CIP 105744 / CCUG 35717).